Consider the following 432-residue polypeptide: Peptidase B (432 aa).

Mn(2+) contacts are provided by K196 and D201. K208 is a catalytic residue. Mn(2+) contacts are provided by D219, D278, and E280. R282 is an active-site residue.

Belongs to the peptidase M17 family. In terms of assembly, homohexamer. Mn(2+) is required as a cofactor.

The protein localises to the cytoplasm. It carries out the reaction Release of an N-terminal amino acid, Xaa, from a peptide or arylamide. Xaa is preferably Glu or Asp but may be other amino acids, including Leu, Met, His, Cys and Gln.. In terms of biological role, probably plays an important role in intracellular peptide degradation. This chain is Peptidase B, found in Vibrio parahaemolyticus serotype O3:K6 (strain RIMD 2210633).